We begin with the raw amino-acid sequence, 332 residues long: UPF0158 protein TC_0713 (332 aa).

Disordered regions lie at residues 196–215 (ALNP…KVEA) and 291–332 (LGYD…KARS). Positions 295–316 (GDGDASDFFGEEYDDDDDDDDD) are enriched in acidic residues. The segment covering 320–332 (KKAAKRGRKKARS) has biased composition (basic residues).

It belongs to the UPF0158 family.

In Chlamydia muridarum (strain MoPn / Nigg), this protein is UPF0158 protein TC_0713.